A 100-amino-acid chain; its full sequence is Urease subunit gamma (100 aa).

It belongs to the urease gamma subunit family. As to quaternary structure, heterotrimer of UreA (gamma), UreB (beta) and UreC (alpha) subunits. Three heterotrimers associate to form the active enzyme.

It is found in the cytoplasm. The enzyme catalyses urea + 2 H2O + H(+) = hydrogencarbonate + 2 NH4(+). It participates in nitrogen metabolism; urea degradation; CO(2) and NH(3) from urea (urease route): step 1/1. In Pseudomonas aeruginosa (strain LESB58), this protein is Urease subunit gamma.